We begin with the raw amino-acid sequence, 343 residues long: Twinfilin (343 aa).

ADF-H domains are found at residues 4–139 (QTGI…KHKV) and 177–312 (GINC…EELH). The disordered stretch occupies residues 314 to 343 (RKLNLRPQFSKPKGPPSRGAKRLTKPQAVE).

Belongs to the actin-binding proteins ADF family. Twinfilin subfamily. In terms of assembly, interacts with G-actin; ADP-actin form.

It localises to the cytoplasm. Its subcellular location is the cytoskeleton. It is found in the cell cortex. Its function is as follows. Actin-binding protein involved in motile and morphological processes. Inhibits actin polymerization, likely by sequestering G-actin. The chain is Twinfilin (twf) from Anopheles gambiae (African malaria mosquito).